Here is a 444-residue protein sequence, read N- to C-terminus: MSQILTAPQAEALHKAMLAYLSVINAPQTAETLREELHFDESYNEATCKKFEGVLEKKWTGIARLQRRINDLEAEVRSLQAELEASPSAARAKNQDPTNWLPKPSSTHTLTSHRDAVTCVAFHPVFTSLASGSEDCTIKIWDWELGEIERTLKGHIRGVSGLDYGGQKGNTLLASCSSDLTIKLWDPSKDYANIRTLSGHDHSVSSVRFLTSNDNHLISASRDGTLRIWDVSTGFCVKVIKSATESWIRDVSPSFDGKWLVSGGRDQAITVWEVSSAEPKAALLGHENFIECCVFAPPASYEHLATLAGLKKPPPATSSCEFVATGARDKTIKLWEARGRLIKTLHGHDNWVRGLVFHPGGKYLFSVSDDKTIRCWDLSQEGRLVKTISGAHEHFVSCIRWAPSPNTDNPDPAGEKAGKKDAVKPSYRCVIATGCADNSVRVFS.

The LisH domain occupies 9–41 (QAEALHKAMLAYLSVINAPQTAETLREELHFDE). A coiled-coil region spans residues 60 to 88 (TGIARLQRRINDLEAEVRSLQAELEASPS). The disordered stretch occupies residues 83 to 107 (LEASPSAARAKNQDPTNWLPKPSST). 7 WD repeats span residues 112 to 153 (SHRD…RTLK), 155 to 195 (HIRG…ANIR), 199 to 239 (GHDH…CVKV), 243 to 282 (ATES…PKAA), 285 to 345 (GHEN…IKTL), 347 to 386 (GHDN…RLVK), and 391 to 437 (AHEH…GCAD).

Belongs to the WD repeat LIS1/nudF family. Interacts with dynein. Self-associates. Interacts with bnfA, nudC and nudE.

The protein resides in the cytoplasm. Its subcellular location is the cytoskeleton. The protein localises to the spindle pole. Functionally, positively regulates the activity of the minus-end directed microtubule motor protein dynein. May enhance dynein-mediated microtubule sliding by targeting dynein to the microtubule plus end. Required for nuclear migration during vegetative growth as well as development. Required for retrograde early endosome (EE) transport from the hyphal tip. Required for localization of dynein to the mitotic spindle poles. Recruits additional proteins to the dynein complex at SPBs. This chain is Nuclear distribution protein nudF, found in Emericella nidulans (strain FGSC A4 / ATCC 38163 / CBS 112.46 / NRRL 194 / M139) (Aspergillus nidulans).